Here is a 70-residue protein sequence, read N- to C-terminus: Probable U6 snRNA-associated Sm-like protein (70 aa).

In terms of domain architecture, Sm spans 3 to 70 (DPFCFLKMYL…ILFVGPRLLL (68 aa)).

The protein belongs to the snRNP Sm proteins family.

It localises to the nucleus. In terms of biological role, binds specifically to the 3'-terminal U-tract of U6 snRNA. This is Probable U6 snRNA-associated Sm-like protein from Encephalitozoon cuniculi (strain GB-M1) (Microsporidian parasite).